The sequence spans 219 residues: Large ribosomal subunit protein uL16 (219 aa).

It belongs to the universal ribosomal protein uL16 family. As to quaternary structure, component of the small ribosomal subunit. Mature ribosomes consist of a small (40S) and a large (60S) subunit. The 40S subunit contains about 33 different proteins and 1 molecule of RNA (18S). The 60S subunit contains about 49 different proteins and 3 molecules of RNA (25S, 5.8S and 5S).

The protein is Large ribosomal subunit protein uL16 (RPL10) of Encephalitozoon cuniculi (strain GB-M1) (Microsporidian parasite).